Consider the following 400-residue polypeptide: 1-deoxy-D-xylulose 5-phosphate reductoisomerase (400 aa).

Thr-10, Gly-11, Ser-12, Ile-13, Gly-36, Asn-38, and Asn-124 together coordinate NADPH. Residue Lys-125 participates in 1-deoxy-D-xylulose 5-phosphate binding. NADPH is bound at residue Glu-126. Asp-150 contacts Mn(2+). 4 residues coordinate 1-deoxy-D-xylulose 5-phosphate: Ser-151, Glu-152, Ser-186, and His-209. Glu-152 contacts Mn(2+). NADPH is bound at residue Gly-215. Residues Ser-222, Asn-227, Lys-228, and Glu-231 each coordinate 1-deoxy-D-xylulose 5-phosphate. Glu-231 provides a ligand contact to Mn(2+).

The protein belongs to the DXR family. Mg(2+) serves as cofactor. Mn(2+) is required as a cofactor.

The enzyme catalyses 2-C-methyl-D-erythritol 4-phosphate + NADP(+) = 1-deoxy-D-xylulose 5-phosphate + NADPH + H(+). The protein operates within isoprenoid biosynthesis; isopentenyl diphosphate biosynthesis via DXP pathway; isopentenyl diphosphate from 1-deoxy-D-xylulose 5-phosphate: step 1/6. Functionally, catalyzes the NADPH-dependent rearrangement and reduction of 1-deoxy-D-xylulose-5-phosphate (DXP) to 2-C-methyl-D-erythritol 4-phosphate (MEP). In Aliivibrio salmonicida (strain LFI1238) (Vibrio salmonicida (strain LFI1238)), this protein is 1-deoxy-D-xylulose 5-phosphate reductoisomerase.